The primary structure comprises 884 residues: Putative GTP diphosphokinase RSH1, chloroplastic (884 aa).

The transit peptide at 1–55 (MTSASSMSVSVECVNICNLTKGDGNARSDCSALSCAWKAPRALTGFLASTAHPPV) directs the protein to the chloroplast. In terms of domain architecture, HD spans 172–279 (FIIHPVAVAR…VKLADRLHNM (108 aa)). The TGS domain maps to 563-626 (LGSRVFVFTP…ENAEVVEIVT (64 aa)). Positions 711 to 727 (QSQDKSRDTTPAPQNGS) are enriched in polar residues. Residues 711-747 (QSQDKSRDTTPAPQNGSVWAPKVNGKHNKAIKNSSSD) are disordered. The ACT domain occupies 797 to 868 (WLCVVSMDRK…LVLGVLGWSS (72 aa)).

Belongs to the RelA/SpoT family. In terms of assembly, interacts with RPP4. Interacts with RPP5. In terms of tissue distribution, expressed in hypocotyls, shoots, cotyledons, rosette leaves, sepals and pistils.

It is found in the plastid. The protein resides in the chloroplast. It carries out the reaction GTP + ATP = guanosine 3'-diphosphate 5'-triphosphate + AMP. Its function is as follows. May be involved in a rapid plant ppGpp (guanosine 3'-diphosphate 5'-diphosphate)-mediated response to pathogens and other stresses. Unable to functionally complement E.coli relA mutants. This is Putative GTP diphosphokinase RSH1, chloroplastic (RSH1) from Arabidopsis thaliana (Mouse-ear cress).